A 443-amino-acid chain; its full sequence is uncharacterized protein (443 aa).

4 consecutive transmembrane segments (helical) span residues I15–A35, L38–S58, A59–L79, and V181–L201. The 4 X 10 AA approximate repeats stretch occupies residues N231 to T270.

The protein belongs to the mycobacterial PPE family.

Its subcellular location is the cell membrane. This is an uncharacterized protein from Mycobacterium tuberculosis (strain ATCC 25618 / H37Rv).